Reading from the N-terminus, the 701-residue chain is Acetyl-coenzyme A synthetase, cytoplasmic (701 aa).

A compositionally biased stretch (basic and acidic residues) spans 1–26 (MGLPEERRKSGSGSRAREETGAEGRV). The segment at 1–37 (MGLPEERRKSGSGSRAREETGAEGRVRGWSPPPEVRR) is disordered. The interval 1–107 (MGLPEERRKS…GATTNICYNV (107 aa)) is interaction with TFEB. The residue at position 30 (serine 30) is a Phosphoserine. 219–222 (RGEK) is a binding site for CoA. Serine 263, serine 265, and serine 267 each carry phosphoserine. Threonine 363 provides a ligand contact to CoA. Lysine 418 carries the post-translational modification N6-acetyllysine. Residues 439–441 (GEP), 463–468 (DTFWQT), aspartate 552, and arginine 567 contribute to the ATP site. Serine 575 and arginine 636 together coordinate CoA. The Nuclear localization signal signature appears at 656–668 (KTRSGKIMRRVLR). Position 659 is a phosphoserine; by AMPK (serine 659). Lysine 661 carries the N6-acetyllysine modification.

It belongs to the ATP-dependent AMP-binding enzyme family. Monomer. Interacts with TFEB. AMPK-mediated phosphorylated form at Ser-659 interacts with KPNA1; this interaction results in nuclear translocation of ACSS2. Interacts with the 'Thr-172' phosphorylated form of PRKAA2. Interacts with CREBBP. Post-translationally, reversibly acetylated at Lys-661. The acetyl-CoA synthase activity is inhibited by acetylation and activated by deacetylation mediated by the deacetylases SIRT1 and SIRT3. Expressed in the hippocampus.

It is found in the cytoplasm. The protein localises to the cytosol. The protein resides in the nucleus. It catalyses the reaction acetate + ATP + CoA = acetyl-CoA + AMP + diphosphate. It carries out the reaction propanoate + ATP + CoA = propanoyl-CoA + AMP + diphosphate. With respect to regulation, inhibited by acetylation at Lys-661 and activated by deacetylation mediated by the deacetylases SIRT1 and SIRT3. Its function is as follows. Catalyzes the synthesis of acetyl-CoA from short-chain fatty acids. Acetate is the preferred substrate but can also utilize propionate with a much lower affinity. Nuclear ACSS2 promotes glucose deprivation-induced lysosomal biogenesis and autophagy, tumor cell survival and brain tumorigenesis. Glucose deprivation results in AMPK-mediated phosphorylation of ACSS2 leading to its translocation to the nucleus where it binds to TFEB and locally produces acetyl-CoA for histone acetylation in the promoter regions of TFEB target genes thereby activating their transcription. The regulation of genes associated with autophagy and lysosomal activity through ACSS2 is important for brain tumorigenesis and tumor survival. Acts as a chromatin-bound transcriptional coactivator that up-regulates histone acetylation and expression of neuronal genes. Can be recruited to the loci of memory-related neuronal genes to maintain a local acetyl-CoA pool, providing the substrate for histone acetylation and promoting the expression of specific genes, which is essential for maintaining long-term spatial memory. The chain is Acetyl-coenzyme A synthetase, cytoplasmic (Acss2) from Mus musculus (Mouse).